Consider the following 94-residue polypeptide: MSDHNEAVRVRISGRVQGVGFRMWTRDEALRLGVTGWVRNEADGSVSALIAGADSAISAMIERLRRGPAGASVSGVETEVAQLENMPRDFRITG.

Residues 7 to 94 (AVRVRISGRV…NMPRDFRITG (88 aa)) enclose the Acylphosphatase-like domain. Catalysis depends on residues Arg22 and Asn40.

It belongs to the acylphosphatase family.

The enzyme catalyses an acyl phosphate + H2O = a carboxylate + phosphate + H(+). This Rhizobium etli (strain ATCC 51251 / DSM 11541 / JCM 21823 / NBRC 15573 / CFN 42) protein is Acylphosphatase (acyP).